The primary structure comprises 318 residues: Homoserine kinase (318 aa).

97-107 is an ATP binding site; that stretch reads PIGSGLGSSAC.

It belongs to the GHMP kinase family. Homoserine kinase subfamily.

Its subcellular location is the cytoplasm. The catalysed reaction is L-homoserine + ATP = O-phospho-L-homoserine + ADP + H(+). The protein operates within amino-acid biosynthesis; L-threonine biosynthesis; L-threonine from L-aspartate: step 4/5. Its function is as follows. Catalyzes the ATP-dependent phosphorylation of L-homoserine to L-homoserine phosphate. The sequence is that of Homoserine kinase from Vibrio cholerae serotype O1 (strain ATCC 39541 / Classical Ogawa 395 / O395).